We begin with the raw amino-acid sequence, 569 residues long: Sulfite reductase [NADPH] hemoprotein beta-component (569 aa).

[4Fe-4S] cluster-binding residues include cysteine 433, cysteine 439, cysteine 478, and cysteine 482. Cysteine 482 is a siroheme binding site.

It belongs to the nitrite and sulfite reductase 4Fe-4S domain family. Alpha(8)-beta(8). The alpha component is a flavoprotein, the beta component is a hemoprotein. Requires siroheme as cofactor. The cofactor is [4Fe-4S] cluster.

It carries out the reaction hydrogen sulfide + 3 NADP(+) + 3 H2O = sulfite + 3 NADPH + 4 H(+). Its pathway is sulfur metabolism; hydrogen sulfide biosynthesis; hydrogen sulfide from sulfite (NADPH route): step 1/1. Functionally, component of the sulfite reductase complex that catalyzes the 6-electron reduction of sulfite to sulfide. This is one of several activities required for the biosynthesis of L-cysteine from sulfate. This Shewanella sediminis (strain HAW-EB3) protein is Sulfite reductase [NADPH] hemoprotein beta-component.